The primary structure comprises 224 residues: Small ribosomal subunit protein uS5 (224 aa).

The segment at 1-38 (MAEQSAGGQGAPEGRDSRDSREGRGRRDGGRGGRDSDK) is disordered. The span at 13 to 38 (EGRDSRDSREGRGRRDGGRGGRDSDK) shows a compositional bias: basic and acidic residues. The S5 DRBM domain occupies 41–104 (YLERVVAINR…EEARKGFFRV (64 aa)).

It belongs to the universal ribosomal protein uS5 family. In terms of assembly, part of the 30S ribosomal subunit. Contacts proteins S4 and S8.

Functionally, with S4 and S12 plays an important role in translational accuracy. In terms of biological role, located at the back of the 30S subunit body where it stabilizes the conformation of the head with respect to the body. This chain is Small ribosomal subunit protein uS5, found in Mycobacterium ulcerans (strain Agy99).